The chain runs to 253 residues: MARSLLLPLQILLLSLALETAGEEAQGDKIIDGAPCARGSHPWQVALLSGNQLHCGGVLVNERWVLTAAHCKMNEYTVHLGSDTLGDRRAQRIKASKSFRHPGYSTQTHVNDLMLVKLNSQARLSSMVKKVRLPSRCEPPGTTCTVSGWGTTTSPDVTFPSDLMCVDVKLISPQDCTKVYKDLLENSMLCAGIPDSKKNACNGDSGGPLVCRGTLQGLVSWGTFPCGQPNDPGVYTQVCKFTKWINDTMKKHR.

An N-terminal signal peptide occupies residues 1–22 (MARSLLLPLQILLLSLALETAG). Residues 23-29 (EEAQGDK) constitute a propeptide, activation peptide. Residues 30 to 250 (IIDGAPCARG…FTKWINDTMK (221 aa)) form the Peptidase S1 domain. 6 disulfides stabilise this stretch: Cys-36-Cys-165, Cys-55-Cys-71, Cys-137-Cys-239, Cys-144-Cys-211, Cys-176-Cys-190, and Cys-201-Cys-226. Active-site charge relay system residues include His-70 and Asp-112. Ser-205 functions as the Charge relay system in the catalytic mechanism. N-linked (GlcNAc...) asparagine glycosylation occurs at Asn-246.

It belongs to the peptidase S1 family. Kallikrein subfamily. Abundantly expressed in the skin and is expressed by keratinocytes in the epidermis. Also expressed in the brain, mammary gland, cerebellum, spinal cord and kidney. Lower levels in salivary glands, uterus, thymus, thyroid, placenta, trachea and testis. Up-regulated in ovarian carcinoma, especially late-stage serous carcinoma, compared with normal ovaries and benign adenomas (at protein level).

It is found in the secreted. The enzyme catalyses Cleavage of proteins with aromatic side chains in the P1 position.. Inhibited by Zn2+ and Cu2+ at low micromolar concentrations. Inhibited by SERPINA12. Functionally, may catalyze the degradation of intercellular cohesive structures in the cornified layer of the skin in the continuous shedding of cells from the skin surface. Specific for amino acid residues with aromatic side chains in the P1 position. Cleaves insulin A chain at '14-Tyr-|-Gln-15' and insulin B chain at '6-Leu-|-Cys-7', '16-Tyr-|-Leu-17', '25-Phe-|-Tyr-26' and '26-Tyr-|-Thr-27'. Could play a role in the activation of precursors to inflammatory cytokines. The protein is Kallikrein-7 (KLK7) of Homo sapiens (Human).